We begin with the raw amino-acid sequence, 197 residues long: Guanylate kinase (197 aa).

A disordered region spans residues 1-30 (MAATPRGTSPVPPDARPRLTVLSGPSGVGK). The 181-residue stretch at 17 to 197 (PRLTVLSGPS…RELLALTNVV (181 aa)) folds into the Guanylate kinase-like domain. 24-31 (GPSGVGKS) is an ATP binding site.

It belongs to the guanylate kinase family.

Its subcellular location is the cytoplasm. It catalyses the reaction GMP + ATP = GDP + ADP. Its function is as follows. Essential for recycling GMP and indirectly, cGMP. This is Guanylate kinase (gmk) from Streptomyces coelicolor (strain ATCC BAA-471 / A3(2) / M145).